Consider the following 515-residue polypeptide: Cyclic AMP receptor-like protein G (515 aa).

At 1 to 16 the chain is on the extracellular side; sequence MSSIIFIPNDADNINS. The helical transmembrane segment at 17–37 threads the bilayer; sequence IMVTISSSLSLVGCLFILSIY. The Cytoplasmic segment spans residues 38 to 50; it reads IYYKELREFQLKL. The helical transmembrane segment at 51-71 threads the bilayer; the sequence is IFIMTINDFIISIIFLIATHI. Topologically, residues 72–92 are extracellular; that stretch reads QTKYFDAITNVFPFFCNFPDS. A helical transmembrane segment spans residues 93–113; sequence LLHYFFLSSFFWEVCIAHTLI. Topologically, residues 114–129 are cytoplasmic; that stretch reads QVIKYNNDKVEDNLKK. The chain crosses the membrane as a helical span at residues 130–150; it reads YFIFSNGLSALIMVSLFFIRS. Over 151–164 the chain is Extracellular; that stretch reads YSKIDCHHDSIFPH. A helical transmembrane segment spans residues 165–185; the sequence is LLFFIPLLLTWIYNIIVCALL. Over 186-276 the chain is Cytoplasmic; it reads TKTFKEQAMN…IRKTPNIIWT (91 aa). Residues 277-297 traverse the membrane as a helical segment; sequence SIFFLFSFGFIWSWSILVIIL. Over 298–306 the chain is Extracellular; sequence KYLSLDVKY. Residues 307 to 327 form a helical membrane-spanning segment; it reads ILMISYFFIPLHGCMNAVCFG. At 328–515 the chain is on the cytoplasmic side; that stretch reads VNDRLRMNLK…FCTIDEDETK (188 aa). Over residues 362 to 375 the composition is skewed to low complexity; the sequence is NGNNKNNKNNNGAN. Disordered regions lie at residues 362 to 409 and 469 to 515; these read NGNN…YYQI and NNNN…DETK. Residues 385 to 396 show a composition bias toward acidic residues; sequence SPDDDDDEDDDN. Composition is skewed to low complexity over residues 397–407 and 469–504; these read NNNNYSDGNYY and NNNN…NNNN.

This sequence belongs to the G-protein coupled receptor 5 family.

The protein localises to the membrane. Functionally, receptor for cAMP. The sequence is that of Cyclic AMP receptor-like protein G (crlG) from Dictyostelium discoideum (Social amoeba).